Here is a 1041-residue protein sequence, read N- to C-terminus: Putative transcription elongation factor SPT5 homolog 1 (1041 aa).

Residues 1-133 (MPRSRDEDDE…ERGDRRYERR (133 aa)) form a disordered region. Composition is skewed to acidic residues over residues 7 to 32 (EDDE…EEEE), 53 to 69 (DYAE…DEDY), and 99 to 114 (DDED…DDFI). Ser59 bears the Phosphoserine mark. A compositionally biased stretch (basic and acidic residues) spans 122 to 133 (PDERGDRRYERR). KOW domains lie at 273-300 (DLSR…VDNV), 425-452 (HFMK…VDEE), 477-504 (YFEP…VDQH), and 601-628 (VIAV…IYKG). Disordered regions lie at residues 662–713 (NRNG…GDDS) and 768–921 (DTSR…GTGL). The segment covering 691–703 (GRGGGYNNSGGRH) has biased composition (gly residues). The 28-residue stretch at 712-739 (DSLLGTTVKIRLGPFKGYRGPVVEVKGN) folds into the KOW 5 domain. Positions 804-814 (DGMRTPMRDRA) are enriched in basic and acidic residues. Polar residues-rich tracts occupy residues 835-844 (SWGTSPQYQP) and 893-904 (TPGQPMTPSSAS). One can recognise a KOW 6 domain in the interval 988–1015 (PPRKSDRVKIVGGQYRGSTGKLIGIDGS).

The protein belongs to the SPT5 family.

It is found in the nucleus. Its function is as follows. May regulate transcription elongation by RNA polymerase II. May enhance transcriptional pausing at sites proximal to the promoter, which may in turn facilitate the assembly of an elongation competent RNA polymerase II complex. This Arabidopsis thaliana (Mouse-ear cress) protein is Putative transcription elongation factor SPT5 homolog 1.